A 229-amino-acid polypeptide reads, in one-letter code: Aldehyde oxidoreductase iron-sulfur-binding subunit PaoA (229 aa).

Residues 1 to 21 (MSNQGEYPEDNRVGKHEPHDL) form a disordered region. The segment at residues 1–53 (MSNQGEYPEDNRVGKHEPHDLSLTRRDLIKVSAATAATAVVYPHSTLAASVPA) is a signal peptide (tat-type signal). Positions 9–21 (EDNRVGKHEPHDL) are enriched in basic and acidic residues. The 2Fe-2S ferredoxin-type domain maps to 61–137 (MPLTLKVNGK…GAEITTIEGL (77 aa)). The [2Fe-2S] cluster site is built by C99, C104, G105, C107, C119, C158, C161, C208, and C210.

As to quaternary structure, heterotrimer composed of PaoA, PaoB and PaoC. Requires [2Fe-2S] cluster as cofactor. In terms of processing, exported by the Tat system. The position of the signal peptide cleavage has not been experimentally proven.

It localises to the periplasm. It carries out the reaction an aldehyde + A + H2O = a carboxylate + AH2 + H(+). With respect to regulation, the complex requires PaoD for activity. Oxidizes aldehydes to the corresponding carboxylic acids with a preference for aromatic aldehydes. It might play a role in the detoxification of aldehydes to avoid cell damage. The polypeptide is Aldehyde oxidoreductase iron-sulfur-binding subunit PaoA (Escherichia coli (strain K12)).